The chain runs to 353 residues: D-glycerol 3-phosphate phosphatase (353 aa).

Catalysis depends on Asp-14, which acts as the Nucleophile. Positions 14, 16, and 209 each coordinate Mg(2+). The Proton donor role is filled by Asp-16.

This sequence belongs to the HAD-like hydrolase superfamily. In terms of assembly, homodimer. It depends on Mg(2+) as a cofactor. The cofactor is Co(2+). Requires Mn(2+) as cofactor.

The enzyme catalyses sn-glycerol 1-phosphate + H2O = glycerol + phosphate. It participates in glycerolipid metabolism. In terms of biological role, dephosphorylates D-glycerol 3-phosphate (sn-glycerol 1-phosphate). Is the final enzyme involved in the recycling/catabolism of glycerophospholipid polar heads. To a lesser extent, is also able to act on glycerol 2-phosphate and D-ribulose 5-phosphate, but cannot use D-glyceraldehyde 3-phosphate, dihydroxyacetone-phosphate, UMP or GMP as substrates. This is D-glycerol 3-phosphate phosphatase from Mycobacterium tuberculosis (strain ATCC 25618 / H37Rv).